A 443-amino-acid chain; its full sequence is MALRLGQLGSGPWWRAVRGDYAQLRAPSPRSASACVCRLPGTAGTQPRRGLGHGSSAGGGSRLGTGLAAALAGMAGLAAAVLGHVQRAEMVPKSSGARSPSPGRLEEDGDELARRCSTFMSSPVTELRELGRRPDDMKTKMELMIMETQAQVCRALAQVDGVADFSVDRWERKEGGGGITCVLQDGRVFEKAGVNISVVHGNLSEEAANQMRSRGKALKKKDGKLPFTAMGISSVIHPKNPYAPTMHFNYRYFEVEEADGKMHWWFGGGCDLTPTYLNREDAVHFHRTLKEACDQHGPDIYPKFKKWCDDYFFIAHRGERRGIGGIFFDDLDSPSKEEAFRFVKTCAEAVVPSYVPIVKKHCDDSYTPQDKLWQQLRRGRYVEFNLVYDRGTKFGLFTPGSRIESILMSLPLTARWEYMHSPPENSKEAEILEVLRHPKDWVH.

The N-terminal 98 residues, 1 to 98 (MALRLGQLGS…EMVPKSSGAR (98 aa)), are a transit peptide targeting the mitochondrion. The interval 90–111 (MVPKSSGARSPSPGRLEEDGDE) is disordered. Ser101 bears the Phosphoserine mark. Positions 182-191 (VLQDGRVFEK) are important for dimerization. Ser233 provides a ligand contact to coproporphyrinogen III. His247 acts as the Proton donor in catalysis. 249-251 (NYR) lines the coproporphyrinogen III pocket. Residues 381 to 417 (YVEFNLVYDRGTKFGLFTPGSRIESILMSLPLTARWE) are important for dimerization. Lys393 carries the N6-acetyllysine; alternate modification. Lys393 carries the post-translational modification N6-succinyllysine; alternate. A coproporphyrinogen III-binding site is contributed by 400–402 (GSR).

The protein belongs to the aerobic coproporphyrinogen-III oxidase family. Homodimer.

The protein resides in the mitochondrion intermembrane space. The enzyme catalyses coproporphyrinogen III + O2 + 2 H(+) = protoporphyrinogen IX + 2 CO2 + 2 H2O. Its pathway is porphyrin-containing compound metabolism; protoporphyrin-IX biosynthesis; protoporphyrinogen-IX from coproporphyrinogen-III (O2 route): step 1/1. In terms of biological role, involved in the heme biosynthesis. Catalyzes the aerobic oxidative decarboxylation of propionate groups of rings A and B of coproporphyrinogen-III to yield the vinyl groups in protoporphyrinogen-IX. This is Oxygen-dependent coproporphyrinogen-III oxidase, mitochondrial from Rattus norvegicus (Rat).